We begin with the raw amino-acid sequence, 169 residues long: Sorting nexin-24 (169 aa).

The residue at position 1 (Met-1) is an N-acetylmethionine. The PX domain occupies 1–125 (MEVYIPSFRY…SFDETESEES (125 aa)). A 1,2-diacyl-sn-glycero-3-phospho-(1D-myo-inositol-3-phosphate) contacts are provided by Arg-38, Ser-40, Lys-61, and Arg-74. 2 positions are modified to phosphoserine: Ser-113 and Ser-116.

This sequence belongs to the sorting nexin family.

Its subcellular location is the cytoplasmic vesicle membrane. Functionally, may be involved in several stages of intracellular trafficking. In Bos taurus (Bovine), this protein is Sorting nexin-24 (SNX24).